A 274-amino-acid polypeptide reads, in one-letter code: Large ribosomal subunit protein uL2cz/uL2cy (274 aa).

2 disordered regions span residues 1–22 (MAIHLYKTSTPSTRNGAVDSQV) and 225–274 (PVDH…RRSK).

The protein belongs to the universal ribosomal protein uL2 family. In terms of assembly, part of the 50S ribosomal subunit.

The protein localises to the plastid. It localises to the chloroplast. This Arabis hirsuta (Hairy rock-cress) protein is Large ribosomal subunit protein uL2cz/uL2cy (rpl2-A).